Consider the following 65-residue polypeptide: Hirudin-3B (65 aa).

The interval Val-1–Tyr-3 is interaction with thrombin active site. Disulfide bonds link Cys-6/Cys-14, Cys-16/Cys-28, and Cys-22/Cys-39. The interval Val-40–Gln-65 is disordered. The O-linked (GalNAc...) threonine glycan is linked to Thr-45. Residues Asp-55 to Gln-65 form an interaction with fibrinogen-binding exosite of thrombin region. Residues Asp-55–Gln-65 show a composition bias toward acidic residues. Position 63 is a sulfotyrosine (Tyr-63).

Belongs to the protease inhibitor I14 (hirudin) family.

The protein localises to the secreted. Its function is as follows. Hirudin is a potent thrombin-specific protease inhibitor. It forms a stable non-covalent complex with alpha-thrombin, thereby abolishing its ability to cleave fibrinogen. This Hirudo medicinalis (Medicinal leech) protein is Hirudin-3B.